Consider the following 1085-residue polypeptide: Ankyrin repeat and IBR domain-containing protein 1 (1085 aa).

Gly-2 carries N-myristoyl glycine lipidation. ANK repeat units lie at residues 45-75 (QHNTPLHYAARHGMNRILGTFLFGRDGNPNK) and 145-174 (KKNTPLHYAAASGMKACVELLVKHGGDLFA). The segment at 282–322 (CQRSGVQMPTPPPSGYNAWDTLPSPRTPRTTRSSVTSPDEI) is disordered. The segment covering 304 to 319 (PSPRTPRTTRSSVTSP) has biased composition (low complexity). The segment at 330 to 570 (DTSLCDICMC…GGYYRCTRYE (241 aa)) is TRIAD supradomain. The Zn(2+) site is built by Cys-334, Cys-337, Cys-352, His-354, Cys-357, Cys-360, Cys-379, Cys-384, Cys-466, Cys-469, His-474, Cys-479, Cys-520, and Cys-523. The RING-type 1 zinc-finger motif lies at 334-384 (CDICMCSISVFEDPVDMPCGHDFCRGCWEAFLNLKIQEGEAHNIFCPAYEC). The IBR-type zinc finger occupies 402–479 (DKRYLQFDIK…LGEAHEPCDC (78 aa)). The RING-type 2; atypical zinc finger occupies 520–549 (CANCKSPIQKNEGCNHMQCAKCKYDFCWIC). The active site involves Cys-533. The Zn(2+) site is built by Cys-538, Cys-541, Cys-546, Cys-549, His-556, and Cys-566. Residues 576–641 (EEQSKEMTVE…RALKETEGGC (66 aa)) are a coiled coil. Ser-738 bears the Phosphoserine mark. The interval 764-808 (RRRHRQQRRRGDVHSLLSNPTDLDEPSESTFDLPEGSSGRRPGAS) is disordered. Positions 846–865 (EDDPNILLAIQLSLQESGLD) constitute a UIM domain. 2 positions are modified to phosphoserine: Ser-879 and Ser-906. 3 disordered regions span residues 884–907 (GSSLPSRLDSVPRSTESPRAALSS), 921–959 (GADSDPFSTDTLSSRPLSETRSDFCPSSSDLDSAGQDPS), and 1014–1085 (PPED…VHSV). A compositionally biased stretch (polar residues) spans 926 to 959 (PFSTDTLSSRPLSETRSDFCPSSSDLDSAGQDPS). A compositionally biased stretch (basic and acidic residues) spans 1018–1033 (SVSKDTGVHEGERAQM). The span at 1068 to 1085 (ASQTPQTSSDWLEQVHSV) shows a compositional bias: polar residues.

This sequence belongs to the RBR family.

The enzyme catalyses [E2 ubiquitin-conjugating enzyme]-S-ubiquitinyl-L-cysteine + [acceptor protein]-L-lysine = [E2 ubiquitin-conjugating enzyme]-L-cysteine + [acceptor protein]-N(6)-ubiquitinyl-L-lysine.. Might act as an E3 ubiquitin-protein ligase, or as part of E3 complex, which accepts ubiquitin from specific E2 ubiquitin-conjugating enzymes and then transfers it to substrates. The sequence is that of Ankyrin repeat and IBR domain-containing protein 1 (Ankib1) from Mus musculus (Mouse).